Consider the following 92-residue polypeptide: MSTRRQAITLYRNLLRESEKLPSYNFRMYAARKIRDTFRANRSTRDFAEIDRQMAEGQQNLELIRRQVIIGHLYSADKLVIENKKTLKPSDD.

The stretch at 48-68 (AEIDRQMAEGQQNLELIRRQV) forms a coiled coil.

The protein belongs to the complex I LYR family. Component of the mitochondrial core iron-sulfur cluster (ISC) assembly complex at least composed of the cysteine desulfurase Nfs1, the scaffold protein IscU, the accessory protein bcn92/Isd11/Lyrm4, and probably fh/frataxin. Interacts with Nfs1.

It localises to the mitochondrion. Functionally, stabilizing factor of the core iron-sulfur cluster (ISC) assembly complex that regulates the stability and cysteine desulfurase activity of Nfs1 and participates in the [2Fe-2S] clusters assembly on the scaffolding protein IscU. This Drosophila melanogaster (Fruit fly) protein is LYR motif-containing protein 4 homolog.